The sequence spans 101 residues: Integration host factor subunit beta (101 aa).

A disordered region spans residues 57-76 (PARAGRNPRTGEHVPVDQKS).

Belongs to the bacterial histone-like protein family. As to quaternary structure, heterodimer of an alpha and a beta chain.

In terms of biological role, this protein is one of the two subunits of integration host factor, a specific DNA-binding protein that functions in genetic recombination as well as in transcriptional and translational control. The polypeptide is Integration host factor subunit beta (Nitrobacter winogradskyi (strain ATCC 25391 / DSM 10237 / CIP 104748 / NCIMB 11846 / Nb-255)).